We begin with the raw amino-acid sequence, 218 residues long: N-alpha-acetyltransferase 11 (218 aa).

An interaction with NAA15 region spans residues 1-58 (MNIRNARPDDLMNMQHCNLLCLPENYQMKYYFYHGLSWPQLSYIAEDEDGKIVGYVLA). An N-acetyltransferase domain is found at 1–152 (MNIRNARPDD…DAYAMKRDLS (152 aa)). The disordered stretch occupies residues 175-218 (EETQGGTLPDAGEACLPKNPTSKDSGSSDSTDVQDSSEDLDSIS). Over residues 196 to 205 (SKDSGSSDST) the composition is skewed to low complexity. The segment covering 209-218 (DSSEDLDSIS) has biased composition (acidic residues).

It belongs to the acetyltransferase family. ARD1 subfamily. As to quaternary structure, component of the N-terminal acetyltransferase A (NatA) complex composed of NAA11 and NAA15. Interacts with HIF1A.

It is found in the cytoplasm. The protein resides in the nucleus. The catalysed reaction is N-terminal glycyl-[protein] + acetyl-CoA = N-terminal N(alpha)-acetylglycyl-[protein] + CoA + H(+). It catalyses the reaction N-terminal L-alanyl-[protein] + acetyl-CoA = N-terminal N(alpha)-acetyl-L-alanyl-[protein] + CoA + H(+). It carries out the reaction N-terminal L-seryl-[protein] + acetyl-CoA = N-terminal N(alpha)-acetyl-L-seryl-[protein] + CoA + H(+). The enzyme catalyses N-terminal L-valyl-[protein] + acetyl-CoA = N-terminal N(alpha)-acetyl-L-valyl-[protein] + CoA + H(+). The catalysed reaction is N-terminal L-cysteinyl-[protein] + acetyl-CoA = N-terminal N(alpha)-acetyl-L-cysteinyl-[protein] + CoA + H(+). It catalyses the reaction N-terminal L-threonyl-[protein] + acetyl-CoA = N-terminal N(alpha)-acetyl-L-threonyl-[protein] + CoA + H(+). Its function is as follows. Displays alpha (N-terminal) acetyltransferase activity. Proposed alternative catalytic subunit of the N-terminal acetyltransferase A (NatA) complex. In Mus musculus (Mouse), this protein is N-alpha-acetyltransferase 11 (Naa11).